The chain runs to 593 residues: Tectonic-1 (593 aa).

Positions M1–T22 are cleaved as a signal peptide. The disordered stretch occupies residues K37–P72. An N-linked (GlcNAc...) asparagine glycan is attached at N41. Polar residues predominate over residues S42 to T58. An N-linked (GlcNAc...) asparagine glycan is attached at N303. Position 486 is an omega-N-methylarginine (R486). Residue N536 is glycosylated (N-linked (GlcNAc...) asparagine).

Belongs to the tectonic family. Part of the tectonic-like complex (also named B9 complex).

It localises to the cytoplasm. It is found in the cytoskeleton. The protein localises to the cilium basal body. Its subcellular location is the secreted. Component of the tectonic-like complex, a complex localized at the transition zone of primary cilia and acting as a barrier that prevents diffusion of transmembrane proteins between the cilia and plasma membranes. Regulator of Hedgehog (Hh), required for both activation and inhibition of the Hh pathway in the patterning of the neural tube. During neural tube development, it is required for formation of the most ventral cell types and for full Hh pathway activation. Functions in Hh signal transduction to fully activate the pathway in the presence of high Hh levels and to repress the pathway in the absence of Hh signals. Modulates Hh signal transduction downstream of SMO and RAB23. In Mus musculus (Mouse), this protein is Tectonic-1 (Tctn1).